Here is a 1160-residue protein sequence, read N- to C-terminus: MSNEELSALAPVGPAAYVYFTKTNHEMNEVLATLSLCDSSSPVVIAPLLMGLTVDQDFCTSVRTPVVCYDGGVLTKVTSFCPFALYFYNTQGIVDFSEPHGDVQRLCDETRQRYAIESYMPEEGRAPTDLAALCTAAGCDPQEVLVHVVVGNGMKEFMYAGQLIPCFEEAAPTRLNDCDAVRVPLYPPTLFGSLQADVDSDELSLDKRSSFVESRGLYVPAVSETLFYYVYTSWCQALRFSETKVLIEAALKQFVNDSQQSVKLAPHKKYFGYTSQKLSSLEKDHLMLSDAVICELGFSFASVFLDSAYGASDSMVYSEWPVVVNATDHRDLIRALTELKLHLSTHISALLFSCNSILYHNRLVYLTSNKNASGTGASQEVLLKSIHFANGLTGLCEDTYNDARKLIKCSGVVAKDERYAPYHLSLICGTCPQLFSAFIWYLNRVSVYNTGLTGSSTLSNHLIGCSSSLCGACGGTCCHTCYNTAFVRVQTRLPQMPRLPKKEPSVVVMQSRFLNDVDVLGTFGRRYSAESKEASLDAKADEGSASTSNRTASSSVDRTHRLNRILDYCKKMRLIDSVTGEDTMTINGRSDFINLVSSLNKFVDDEAMSFVSEVRMKSNRDEVLGATQAFNLDLNPFAVSFSPILAYEYYRVIFAIIQNVALITATSYIVDNPLTTSLVSRWVTQHFQSIHGAFSTTSSRKGFLFIRNVKSSKNADHDRLPDFKLYARGTYSVISMEIKLSRLSVPSLLMFRVKNRPISKASKGTTAHVFFRREHVPKKNPVKGCLGFLLYKYHDKLFPDCGFSCLQFWQKVCANALPKNVNIGDMGEFNNFVKFVISVTADYNEHDLIDVPPDCMLNYLENRFHNKFLCFYGFKDYIGTLHGLTTRLTYQNHAQFPYLLGESPNFASAADFALRLKDLKATGVTAPLASTVTRESLMRTIFEQRSLVTVSFSIEKYAGVNNNKEIYQFGQIGYFSGNGVERSLNTNSIGGQDYKFMRQRCILATKLSDVLIKRSRRDNVLFDEDIIKNRVMAALDSENLDVDPELMAMYEILSTREEIPERDDVLFFVDGCQAVADSLMEKFSRLQEMGVDDFSLVNLQQVLDSRPECGGGGGEVHDLSALFTAASGEAVGNSVGLNARGGEHAFDEDCGLLPAKRGRL.

The Required for filament formation signature appears at 808 to 809 (FW). Positions 1139-1160 (ARGGEHAFDEDCGLLPAKRGRL) are required for nuclear localization.

This sequence belongs to the herpesviridae major DNA-binding protein family. As to quaternary structure, homooligomers. Forms double-helical filaments necessary for the formation of replication compartments within the host nucleus. Interacts with the origin-binding protein. Interacts with the helicase primase complex; this interaction stimulates primer synthesis activity of the helicase-primase complex. Interacts with the DNA polymerase. Interacts with the alkaline exonuclease; this interaction increases its nuclease processivity.

It localises to the host nucleus. Functionally, single-stranded DNA-binding protein required for DNA replication. Its function is as follows. Plays several crucial roles in viral infection. Participates in the opening of the viral DNA origin to initiate replication by interacting with the origin-binding protein. May disrupt loops, hairpins and other secondary structures present on ssDNA to reduce and eliminate pausing of viral DNA polymerase at specific sites during elongation. Promotes viral DNA recombination by performing strand-transfer, characterized by the ability to transfer a DNA strand from a linear duplex to a complementary single-stranded DNA circle. Can also catalyze the renaturation of complementary single strands. Additionally, reorganizes the host cell nucleus, leading to the formation of prereplicative sites and replication compartments. This process is driven by the protein which can form double-helical filaments in the absence of DNA. This is Major DNA-binding protein from Simian cytomegalovirus (strain Colburn).